The primary structure comprises 166 residues: uncharacterized protein (166 aa).

Its function is as follows. This protein may be involved in virus assembly. Essential for virus function. This is an uncharacterized protein from Sulfolobus spindle-shape virus 1 (SSV1).